The primary structure comprises 237 residues: Derlin-2 (237 aa).

The Cytoplasmic portion of the chain corresponds to 1 to 20 (MNGVVAALEEMPPVTRFYTG). A helical transmembrane segment spans residues 21–41 (ACVLLTTAVHLEFVTPFHLYF). The Lumenal portion of the chain corresponds to 42–54 (NWELIIRKYQFWR). A helical transmembrane segment spans residues 55–75 (LITSFCFFGSFGFSFLFNMIF). Over 76–97 (TYRYCMMLEEGSFRGRRADFVY) the chain is Cytoplasmic. A helical transmembrane segment spans residues 98–118 (MFLFGAVLMILSGIFVQILFL). Residues 119-166 (GQAFTIMLVYIWSRRNPMIQMNFFGVLTFTAPYLPWVLLLFSLLLGNN) are Lumenal-facing. The helical transmembrane segment at 167 to 187 (AVVDFMGIACGHIYFFLEDVF) threads the bilayer. Over 188–237 (PFQEHGKRFLKTPQWLVYLFDERRPEPLPEDERPGGFEWGDEQPEQEQHD) the chain is Cytoplasmic. The segment covering 212 to 222 (PEPLPEDERPG) has biased composition (basic and acidic residues). Residues 212–237 (PEPLPEDERPGGFEWGDEQPEQEQHD) form a disordered region. The segment covering 226–237 (WGDEQPEQEQHD) has biased composition (acidic residues).

Belongs to the derlin family.

The protein resides in the endoplasmic reticulum membrane. Its function is as follows. May be required for the degradation process of some specific misfolded endoplasmic reticulum (ER) luminal proteins. Participates in the transfer of misfolded proteins from the ER to the cytosol, where they are destroyed by the proteasome in a ubiquitin-dependent manner. Its precise function remains unclear, but its ability to complement der1 mutations in C.cerevisiae, suggests a similar function in the degradation of ER misfolded proteins. The protein is Derlin-2 of Caenorhabditis elegans.